A 430-amino-acid chain; its full sequence is Dynactin subunit 2 (430 aa).

Disordered stretches follow at residues 1–51 (MSEG…IDRS) and 201–228 (SLSS…SSSS). Positions 32–44 (SISNLADESSELV) are enriched in polar residues. Coiled coils occupy residues 241-319 (TGEQ…QDET) and 397-430 (DDSF…QQQQ).

It belongs to the dynactin subunit 2 family. In terms of assembly, subunit of dynactin, a multiprotein complex associated with dynein.

It is found in the cytoplasm. The protein localises to the cytoskeleton. It localises to the membrane. Its function is as follows. Modulates cytoplasmic dynein binding to an organelle, and plays a role in prometaphase chromosome alignment and spindle organization during mitosis. The chain is Dynactin subunit 2 (dynB) from Dictyostelium discoideum (Social amoeba).